Here is a 197-residue protein sequence, read N- to C-terminus: Putative double homeobox protein 3 (197 aa).

2 consecutive DNA-binding regions (homeobox) follow at residues 46 to 105 (GRRM…LRQH) and 121 to 180 (GRRK…WGQS). Residues 102–127 (LRQHRRQSRPWPGRRDPQKGRRKRTA) form a disordered region.

Belongs to the paired homeobox family. In terms of tissue distribution, expressed in hepatoma Hep3B cells.

It is found in the nucleus. This Homo sapiens (Human) protein is Putative double homeobox protein 3 (DUX3).